Consider the following 422-residue polypeptide: Keratan-sulfate endo-1,4-beta-galactosidase (422 aa).

Positions 1–46 are cleaved as a signal peptide; sequence MRKTKFWLVLSLIATSLSIFACKKDSTATKNPIPEVSKAKASTKLL. One can recognise a GH16 domain in the interval 47–292; sequence NATTVATTDY…YVRVYKLPLF (246 aa). The active-site Nucleophile is the E171. The Proton donor role is filled by E176. One can recognise a CBM-cenC domain in the interval 291 to 406; it reads LFSNGDFESG…NTTATVYFYK (116 aa).

This sequence belongs to the glycosyl hydrolase 16 family.

The protein resides in the secreted. The enzyme catalyses Endohydrolysis of (1-&gt;4)-beta-D-galactosidic linkages in keratan sulfate.. Functionally, hydrolyzes internal endo-beta-galactosyl linkages in keratan sulfate and in various neolacto-type glycosphingolipids, producing sulfated and non-sulfated disaccharides, and glucosylceramides respectivly. The sequence is that of Keratan-sulfate endo-1,4-beta-galactosidase from Sphingobacterium multivorum.